We begin with the raw amino-acid sequence, 151 residues long: Protein PLANT CADMIUM RESISTANCE 1 (151 aa).

2 helical membrane passes run 31–47 (ITLCCPCITFGQVAEIV) and 54–71 (CCAAGALYMLIDLITSCG).

It belongs to the cornifelin family. In terms of assembly, homopentamer. In terms of tissue distribution, expressed in aerial part, but not in roots. Detected in the guard and mesophyll cells.

It is found in the cell membrane. Functionally, involved in glutathione-independent cadmium resistance. Reduces cadmium uptake rather than activating efflux, but is not closely coupled to calcium transporter. The protein is Protein PLANT CADMIUM RESISTANCE 1 (PCR1) of Arabidopsis thaliana (Mouse-ear cress).